The primary structure comprises 100 residues: Urease subunit gamma (100 aa).

Belongs to the urease gamma subunit family. Heterotrimer of UreA (gamma), UreB (beta) and UreC (alpha) subunits. Three heterotrimers associate to form the active enzyme.

Its subcellular location is the cytoplasm. It catalyses the reaction urea + 2 H2O + H(+) = hydrogencarbonate + 2 NH4(+). Its pathway is nitrogen metabolism; urea degradation; CO(2) and NH(3) from urea (urease route): step 1/1. Its function is as follows. Ureolysis may allow urea to be employed as a nitrogen source for growth and produces ammonia which may protect from killing at low pH. In Streptococcus salivarius (strain 57.I), this protein is Urease subunit gamma.